A 487-amino-acid chain; its full sequence is Glutamate--tRNA ligase (487 aa).

A 'HIGH' region motif is present at residues 11–21 (PSPTGYPHLGN). Residues C108, C110, C135, and D137 each contribute to the Zn(2+) site. The short motif at 245–249 (KLSKR) is the 'KMSKS' region element. K248 is an ATP binding site.

Belongs to the class-I aminoacyl-tRNA synthetase family. Glutamate--tRNA ligase type 1 subfamily. In terms of assembly, monomer. The cofactor is Zn(2+).

The protein resides in the cytoplasm. The enzyme catalyses tRNA(Glu) + L-glutamate + ATP = L-glutamyl-tRNA(Glu) + AMP + diphosphate. Its function is as follows. Catalyzes the attachment of glutamate to tRNA(Glu) in a two-step reaction: glutamate is first activated by ATP to form Glu-AMP and then transferred to the acceptor end of tRNA(Glu). The sequence is that of Glutamate--tRNA ligase from Dehalococcoides mccartyi (strain ATCC BAA-2100 / JCM 16839 / KCTC 5957 / BAV1).